The primary structure comprises 407 residues: Imidazolonepropionase (407 aa).

Positions 74 and 76 each coordinate Fe(3+). Positions 74 and 76 each coordinate Zn(2+). Residues R83, Y146, and H179 each coordinate 4-imidazolone-5-propanoate. Y146 contacts N-formimidoyl-L-glutamate. H244 contacts Fe(3+). H244 is a binding site for Zn(2+). Q247 contributes to the 4-imidazolone-5-propanoate binding site. D319 contributes to the Fe(3+) binding site. D319 is a binding site for Zn(2+). N-formimidoyl-L-glutamate-binding residues include N321 and G323. Position 324 (T324) interacts with 4-imidazolone-5-propanoate.

Belongs to the metallo-dependent hydrolases superfamily. HutI family. Zn(2+) serves as cofactor. The cofactor is Fe(3+).

The protein localises to the cytoplasm. The catalysed reaction is 4-imidazolone-5-propanoate + H2O = N-formimidoyl-L-glutamate. It functions in the pathway amino-acid degradation; L-histidine degradation into L-glutamate; N-formimidoyl-L-glutamate from L-histidine: step 3/3. In terms of biological role, catalyzes the hydrolytic cleavage of the carbon-nitrogen bond in imidazolone-5-propanoate to yield N-formimidoyl-L-glutamate. It is the third step in the universal histidine degradation pathway. In Salmonella arizonae (strain ATCC BAA-731 / CDC346-86 / RSK2980), this protein is Imidazolonepropionase.